A 249-amino-acid polypeptide reads, in one-letter code: AA9 family lytic polysaccharide monooxygenase A (249 aa).

The signal sequence occupies residues 1–19 (MRGPLCFTLIAIAVTSVVA). Cu(2+) contacts are provided by His-20 and His-97. Cys-60 and Cys-183 are disulfide-bonded. Position 163 (His-163) interacts with O2. Tyr-180 serves as a coordination point for Cu(2+).

The protein belongs to the polysaccharide monooxygenase AA9 family. The cofactor is Cu(2+).

Its subcellular location is the secreted. The enzyme catalyses [(1-&gt;4)-beta-D-glucosyl]n+m + reduced acceptor + O2 = 4-dehydro-beta-D-glucosyl-[(1-&gt;4)-beta-D-glucosyl]n-1 + [(1-&gt;4)-beta-D-glucosyl]m + acceptor + H2O.. Functionally, lytic polysaccharide monooxygenase (LPMO) that depolymerizes crystalline and amorphous polysaccharides via the oxidation of scissile alpha- or beta-(1-4)-glycosidic bonds, yielding C4 oxidation products. Catalysis by LPMOs requires the reduction of the active-site copper from Cu(II) to Cu(I) by a reducing agent and H(2)O(2) or O(2) as a cosubstrate. Active on cellulose and cello-oligosaccharides, as well as plant cell wall-derived hemicellulosic polysaccharides. Also active on cello-oligosaccharides such as cellohexaose, cellopentaose or cellotetraose. This chain is AA9 family lytic polysaccharide monooxygenase A, found in Armillaria gallica (Bulbous honey fungus).